A 92-amino-acid chain; its full sequence is Small ribosomal subunit protein uS19 (92 aa).

The protein belongs to the universal ribosomal protein uS19 family.

Its function is as follows. Protein S19 forms a complex with S13 that binds strongly to the 16S ribosomal RNA. This Staphylococcus epidermidis (strain ATCC 35984 / DSM 28319 / BCRC 17069 / CCUG 31568 / BM 3577 / RP62A) protein is Small ribosomal subunit protein uS19.